Consider the following 203-residue polypeptide: Glycerol-3-phosphate acyltransferase (203 aa).

The next 5 membrane-spanning stretches (helical) occupy residues 2-22, 54-74, 80-100, 114-134, and 153-173; these read LATL…AILV, CLVL…AYFL, ALGL…FFGF, LPIG…MVAI, and TWLI…LIIF.

It belongs to the PlsY family. In terms of assembly, probably interacts with PlsX.

It is found in the cell inner membrane. The enzyme catalyses an acyl phosphate + sn-glycerol 3-phosphate = a 1-acyl-sn-glycero-3-phosphate + phosphate. Its pathway is lipid metabolism; phospholipid metabolism. In terms of biological role, catalyzes the transfer of an acyl group from acyl-phosphate (acyl-PO(4)) to glycerol-3-phosphate (G3P) to form lysophosphatidic acid (LPA). This enzyme utilizes acyl-phosphate as fatty acyl donor, but not acyl-CoA or acyl-ACP. The chain is Glycerol-3-phosphate acyltransferase from Pseudoalteromonas translucida (strain TAC 125).